Here is a 392-residue protein sequence, read N- to C-terminus: Alanine racemase 2 (392 aa).

The active-site Proton acceptor; specific for D-alanine is Lys-40. Lys-40 carries the post-translational modification N6-(pyridoxal phosphate)lysine. Residue Arg-138 coordinates substrate. Tyr-266 acts as the Proton acceptor; specific for L-alanine in catalysis. Residue Met-314 participates in substrate binding.

The protein belongs to the alanine racemase family. The cofactor is pyridoxal 5'-phosphate.

It carries out the reaction L-alanine = D-alanine. It functions in the pathway amino-acid biosynthesis; D-alanine biosynthesis; D-alanine from L-alanine: step 1/1. Functionally, catalyzes the interconversion of L-alanine and D-alanine. May also act on other amino acids. This chain is Alanine racemase 2 (alr2), found in Oceanobacillus iheyensis (strain DSM 14371 / CIP 107618 / JCM 11309 / KCTC 3954 / HTE831).